Consider the following 422-residue polypeptide: UDP-N-acetylglucosamine 1-carboxyvinyltransferase (422 aa).

Position 22 to 23 (22 to 23) interacts with phosphoenolpyruvate; sequence KN. Arg95 lines the UDP-N-acetyl-alpha-D-glucosamine pocket. Cys119 serves as the catalytic Proton donor. At Cys119 the chain carries 2-(S-cysteinyl)pyruvic acid O-phosphothioketal. Residues 124 to 128, Asp309, and Val331 contribute to the UDP-N-acetyl-alpha-D-glucosamine site; that span reads RPIDQ.

Belongs to the EPSP synthase family. MurA subfamily.

The protein localises to the cytoplasm. The catalysed reaction is phosphoenolpyruvate + UDP-N-acetyl-alpha-D-glucosamine = UDP-N-acetyl-3-O-(1-carboxyvinyl)-alpha-D-glucosamine + phosphate. It participates in cell wall biogenesis; peptidoglycan biosynthesis. Its function is as follows. Cell wall formation. Adds enolpyruvyl to UDP-N-acetylglucosamine. In Anaeromyxobacter sp. (strain K), this protein is UDP-N-acetylglucosamine 1-carboxyvinyltransferase.